The primary structure comprises 246 residues: Small ribosomal subunit protein uS2 (246 aa).

Belongs to the universal ribosomal protein uS2 family.

The protein is Small ribosomal subunit protein uS2 of Dictyoglomus turgidum (strain DSM 6724 / Z-1310).